Reading from the N-terminus, the 118-residue chain is Na(+)/H(+) antiporter subunit G1 (118 aa).

The next 3 helical transmembrane spans lie at 9 to 29, 47 to 67, and 69 to 89; these read VSIIFVVLGALISAFAATGLI, LGAMFLLFGAFLYFIGTEGYV, and MQLIIGIIFVFITGPLSSHLI.

This sequence belongs to the CPA3 antiporters (TC 2.A.63) subunit G family. As to quaternary structure, may form a heterooligomeric complex that consists of seven subunits: mnhA1, mnhB1, mnhC1, mnhD1, mnhE1, mnhF1 and mnhG1.

It localises to the cell membrane. Functionally, mnh complex is a Na(+)/H(+) antiporter involved in Na(+) excretion. The polypeptide is Na(+)/H(+) antiporter subunit G1 (mnhG1) (Staphylococcus epidermidis (strain ATCC 35984 / DSM 28319 / BCRC 17069 / CCUG 31568 / BM 3577 / RP62A)).